A 66-amino-acid polypeptide reads, in one-letter code: MFTLKKSLLILFFLGTINFSLCEEERNAEEERRDDPEERDVEVEKRFLPLLLAGLPKLLCFLFKKC.

A signal peptide spans 1 to 22; that stretch reads MFTLKKSLLILFFLGTINFSLC. The propeptide occupies 23–44; sequence EEERNAEEERRDDPEERDVEVE. Cys60 and Cys66 are disulfide-bonded.

The protein belongs to the frog skin active peptide (FSAP) family. Brevinin subfamily. Expressed by the skin glands.

It localises to the secreted. Antimicrobial peptide. The chain is Brevinin-1CDYd from Rana dybowskii (Dybovsky's frog).